An 85-amino-acid chain; its full sequence is Cysteine-rich venom protein 1 (85 aa).

The signal sequence occupies residues 1–21 (MCRYALIVLVVVVVATNLSEA). Cystine bridges form between cysteine 29–cysteine 63, cysteine 38–cysteine 59, cysteine 42–cysteine 53, cysteine 46–cysteine 84, and cysteine 65–cysteine 78. A TIL domain is found at 29 to 84 (CEPNRIYKTCGPACPPTCEDPDPDCNETPQCKAGCFCIPGLIENMKGGNCISPSLC).

The protein belongs to the serine protease inhibitor-like (TIL domain-containing) family. Expressed by the venom gland.

The protein localises to the secreted. Its function is as follows. May be a phenoloxidase inhibitor that stabilizes or inhibits venom phenoloxidase while it is stored in the venom sac. This chain is Cysteine-rich venom protein 1, found in Pimpla hypochondriaca (Parasitoid wasp).